Reading from the N-terminus, the 264-residue chain is Cancer/testis antigen 55 (264 aa).

The tract at residues 242–264 (SSSGFQDDGGLGRPKRERRSQSI) is disordered. Over residues 254 to 264 (RPKRERRSQSI) the composition is skewed to basic residues.

As to quaternary structure, interacts with GABARAP; this interaction may be important for GABARAP protein stability. Isoform 1 interacts with LAMP2; this interaction may be important for LAMP2 protein stability. As to expression, testis-specific. Expressed in spermatozoa (at protein level).

It localises to the cytoplasm. The protein localises to the cytoplasmic vesicle. It is found in the secretory vesicle. Its subcellular location is the acrosome. The protein resides in the cell projection. It localises to the cilium. The protein localises to the flagellum. In terms of biological role, plays a role in spermatogenesis, possibly acting in the regulation of the autophagy pathway. This is Cancer/testis antigen 55 (CT55) from Homo sapiens (Human).